The sequence spans 234 residues: Zinc finger FYVE domain-containing protein 21 (234 aa).

An FYVE-type zinc finger spans residues 44-104 (DKECPRCMQC…QCADCALVSH (61 aa)). Positions 50, 53, 66, 69, 74, 77, 96, and 99 each coordinate Zn(2+). The interval 107-234 (AEFYDKQLKV…TKLLYESRDQ (128 aa)) is PH-like.

Interacts with PTK2/FAK1.

The protein resides in the cell junction. Its subcellular location is the focal adhesion. It localises to the cytoplasmic vesicle. It is found in the endosome. In terms of biological role, plays a role in cell adhesion, and thereby in cell motility which requires repeated formation and disassembly of focal adhesions. Regulates microtubule-induced PTK2/FAK1 dephosphorylation, an event important for focal adhesion disassembly, as well as integrin beta-1/ITGB1 cell surface expression. The chain is Zinc finger FYVE domain-containing protein 21 (Zfyve21) from Rattus norvegicus (Rat).